Reading from the N-terminus, the 318-residue chain is Aspartate carbamoyltransferase catalytic subunit (318 aa).

Carbamoyl phosphate is bound by residues R59 and T60. K87 provides a ligand contact to L-aspartate. Positions 109, 137, and 140 each coordinate carbamoyl phosphate. L-aspartate is bound by residues R170 and R224. 2 residues coordinate carbamoyl phosphate: G265 and P266.

This sequence belongs to the aspartate/ornithine carbamoyltransferase superfamily. ATCase family. As to quaternary structure, heterododecamer (2C3:3R2) of six catalytic PyrB chains organized as two trimers (C3), and six regulatory PyrI chains organized as three dimers (R2).

The catalysed reaction is carbamoyl phosphate + L-aspartate = N-carbamoyl-L-aspartate + phosphate + H(+). The protein operates within pyrimidine metabolism; UMP biosynthesis via de novo pathway; (S)-dihydroorotate from bicarbonate: step 2/3. Functionally, catalyzes the condensation of carbamoyl phosphate and aspartate to form carbamoyl aspartate and inorganic phosphate, the committed step in the de novo pyrimidine nucleotide biosynthesis pathway. In Rhizobium etli (strain ATCC 51251 / DSM 11541 / JCM 21823 / NBRC 15573 / CFN 42), this protein is Aspartate carbamoyltransferase catalytic subunit.